Here is a 597-residue protein sequence, read N- to C-terminus: Period protein homolog lin-42 (597 aa).

The tract at residues 1-44 (MEPAGHSSATHNIVVPNANPTQPQPLAPAMREEGATLSPPNTWS) is disordered. Residues 155-223 (LQASHVSSNF…VRQAHIDLHN (69 aa)) enclose the PAS domain. 4 disordered regions span residues 313 to 335 (PVPSTSRHSHHHHHSSLKDQNQG), 418 to 450 (KSQSRPESPAKQDEPFDEKKYPPQTPLTREALT), 473 to 509 (DDVPSSPPAKRTTPIHWTSSSQNHYRTMAPAPPPPPG), and 555 to 597 (DGLL…DSQN). Positions 425 to 438 (SPAKQDEPFDEKKY) are enriched in basic and acidic residues. Over residues 487 to 497 (IHWTSSSQNHY) the composition is skewed to polar residues. A compositionally biased stretch (low complexity) spans 561-577 (GATSTGGASPTSGTNSP).

It is found in the nucleus. The protein resides in the cytoplasm. Its function is as follows. Transcriptional repressor which interacts with the promoter region of target genes. Has a specific role in developmental timing where it regulates temporal expression of a number of miRNAs and mRNAs. Controls temporal cell fate transition during embryonic and early larval development by restricting the expression of specific miRNAs, including let-7, miR-48, lin-4, miR-35 and miR-58. Restricts the accumulation of lin-29 in the hypodermis to the larval L4 stage, thus controlling terminal differentiation of seam cells. Has a role in the miRNA-mediated specification of asymmetric gene expression patterns in gustatory neurons. May also regulate genes involved in other biological processes including transport, small molecule metabolism, and growth. Inhibits dauer formation, by antagonizing daf-12. Specifically required for maintaining the timing of larval development and molting cycle rhythms. The sequence is that of Period protein homolog lin-42 from Caenorhabditis elegans.